Here is a 158-residue protein sequence, read N- to C-terminus: Small ribosomal subunit protein uS7 (158 aa).

It belongs to the universal ribosomal protein uS7 family. In terms of assembly, part of the 30S ribosomal subunit. Contacts proteins S9 and S11.

In terms of biological role, one of the primary rRNA binding proteins, it binds directly to 16S rRNA where it nucleates assembly of the head domain of the 30S subunit. Is located at the subunit interface close to the decoding center, probably blocks exit of the E-site tRNA. This Granulibacter bethesdensis (strain ATCC BAA-1260 / CGDNIH1) protein is Small ribosomal subunit protein uS7.